Here is a 440-residue protein sequence, read N- to C-terminus: Transposon Ty1-PR2 Gag polyprotein (440 aa).

3 stretches are compositionally biased toward polar residues: residues 1–10 (MESQQLSNYP), 48–60 (TKANSQQTTTPAS), and 127–152 (QSQFPQYPSSVGTPLSTPSPESGNTF). 3 disordered regions span residues 1–93 (MESQ…MMTQ), 126–173 (PQSQ…RPPP), and 352–440 (GSRN…PETY). Over residues 153–165 (TDSSSADSDMTST) the composition is skewed to low complexity. The interval 299–401 (NNGIHINNKV…NSKSKTARAH (103 aa)) is RNA-binding. Residues 402 to 418 (NVSTSNNSPSTDNDSIS) are compositionally biased toward low complexity. Residue S416 is modified to Phosphoserine. The segment covering 419–428 (KSTTEPIQLN) has biased composition (polar residues). Positions 429 to 440 (NKHDLHLRPETY) are enriched in basic and acidic residues.

In terms of assembly, homotrimer.

The protein localises to the cytoplasm. In terms of biological role, capsid protein (CA) is the structural component of the virus-like particle (VLP), forming the shell that encapsulates the retrotransposons dimeric RNA genome. The particles are assembled from trimer-clustered units and there are holes in the capsid shells that allow for the diffusion of macromolecules. CA also has nucleocapsid-like chaperone activity, promoting primer tRNA(i)-Met annealing to the multipartite primer-binding site (PBS), dimerization of Ty1 RNA and initiation of reverse transcription. This Saccharomyces cerevisiae (strain ATCC 204508 / S288c) (Baker's yeast) protein is Transposon Ty1-PR2 Gag polyprotein (TY1A-PR2).